The sequence spans 434 residues: Adenylosuccinate synthetase (434 aa).

GTP contacts are provided by residues 14 to 20 (GDEGKGK) and 42 to 44 (GHE). The Proton acceptor role is filled by Asp-15. Asp-15 and Gly-42 together coordinate Mg(2+). IMP-binding positions include 15-18 (DEGK), 40-43 (NSGH), Thr-133, Arg-147, Asn-229, Thr-244, and Arg-308. Residue His-43 is the Proton donor of the active site. Residue 304–310 (VTTGRVR) coordinates substrate. GTP is bound by residues Arg-310, 336-338 (KLD), and 422-424 (GTG).

This sequence belongs to the adenylosuccinate synthetase family. Homodimer. It depends on Mg(2+) as a cofactor.

It localises to the cytoplasm. The enzyme catalyses IMP + L-aspartate + GTP = N(6)-(1,2-dicarboxyethyl)-AMP + GDP + phosphate + 2 H(+). The protein operates within purine metabolism; AMP biosynthesis via de novo pathway; AMP from IMP: step 1/2. Its function is as follows. Plays an important role in the salvage pathway for purine nucleotide biosynthesis. Catalyzes the first committed step in the biosynthesis of AMP from IMP. The protein is Adenylosuccinate synthetase of Theileria parva (East coast fever infection agent).